Reading from the N-terminus, the 435-residue chain is NADH-quinone oxidoreductase subunit D (435 aa).

The protein belongs to the complex I 49 kDa subunit family. NDH-1 is composed of 14 different subunits. Subunits NuoB, C, D, E, F, and G constitute the peripheral sector of the complex.

It is found in the cell inner membrane. It carries out the reaction a quinone + NADH + 5 H(+)(in) = a quinol + NAD(+) + 4 H(+)(out). Its function is as follows. NDH-1 shuttles electrons from NADH, via FMN and iron-sulfur (Fe-S) centers, to quinones in the respiratory chain. The immediate electron acceptor for the enzyme in this species is believed to be ubiquinone. Couples the redox reaction to proton translocation (for every two electrons transferred, four hydrogen ions are translocated across the cytoplasmic membrane), and thus conserves the redox energy in a proton gradient. The polypeptide is NADH-quinone oxidoreductase subunit D (Xylella fastidiosa (strain M12)).